Here is a 288-residue protein sequence, read N- to C-terminus: Transmembrane and coiled-coil domain-containing protein 5A (288 aa).

Residues 10–189 are a coiled coil; it reads KKNIISLNMD…ELETGYLERE (180 aa). Residues 227-249 form a helical membrane-spanning segment; sequence SLLFSTLFFIRLLGYLIFHLSFI.

Belongs to the TMCO5 family. In terms of tissue distribution, only detected in testis (at protein level).

The protein resides in the endoplasmic reticulum membrane. It localises to the nucleus membrane. In Mus musculus (Mouse), this protein is Transmembrane and coiled-coil domain-containing protein 5A (Tmco5a).